We begin with the raw amino-acid sequence, 425 residues long: Adenosylhomocysteinase (425 aa).

Residues threonine 60, aspartate 132, and glutamate 157 each contribute to the substrate site. Residue 158-160 participates in NAD(+) binding; sequence TTT. Residues lysine 187 and aspartate 191 each coordinate substrate. Residues asparagine 192, 221 to 226, glutamate 244, asparagine 279, 300 to 302, and asparagine 347 each bind NAD(+); these read GYGWCG and SGH.

The protein belongs to the adenosylhomocysteinase family. The cofactor is NAD(+).

The protein localises to the cytoplasm. The catalysed reaction is S-adenosyl-L-homocysteine + H2O = L-homocysteine + adenosine. Its pathway is amino-acid biosynthesis; L-homocysteine biosynthesis; L-homocysteine from S-adenosyl-L-homocysteine: step 1/1. May play a key role in the regulation of the intracellular concentration of adenosylhomocysteine. The polypeptide is Adenosylhomocysteinase (Synechocystis sp. (strain ATCC 27184 / PCC 6803 / Kazusa)).